Here is a 64-residue protein sequence, read N- to C-terminus: DNA gyrase inhibitor YacG (64 aa).

Residues Cys-7, Cys-10, Cys-26, and Cys-30 each coordinate Zn(2+). The disordered stretch occupies residues 44-64 (RIPGEIDPELLPYPEEGEQWQ).

Belongs to the DNA gyrase inhibitor YacG family. In terms of assembly, interacts with GyrB. Zn(2+) serves as cofactor.

Functionally, inhibits all the catalytic activities of DNA gyrase by preventing its interaction with DNA. Acts by binding directly to the C-terminal domain of GyrB, which probably disrupts DNA binding by the gyrase. This Aeromonas hydrophila subsp. hydrophila (strain ATCC 7966 / DSM 30187 / BCRC 13018 / CCUG 14551 / JCM 1027 / KCTC 2358 / NCIMB 9240 / NCTC 8049) protein is DNA gyrase inhibitor YacG.